Here is a 352-residue protein sequence, read N- to C-terminus: Glycerol-1-phosphate dehydrogenase [NAD(P)+] (352 aa).

NAD(+)-binding positions include 98–102 and 120–123; these read GKAID and TAAS. Aspartate 125 contributes to the substrate binding site. Serine 129 contacts NAD(+). Aspartate 172 serves as a coordination point for substrate. 2 residues coordinate Zn(2+): aspartate 172 and histidine 252. Residue histidine 256 participates in substrate binding. Histidine 268 is a Zn(2+) binding site.

It belongs to the glycerol-1-phosphate dehydrogenase family. The cofactor is Zn(2+).

It localises to the cytoplasm. The enzyme catalyses sn-glycerol 1-phosphate + NAD(+) = dihydroxyacetone phosphate + NADH + H(+). It catalyses the reaction sn-glycerol 1-phosphate + NADP(+) = dihydroxyacetone phosphate + NADPH + H(+). The protein operates within membrane lipid metabolism; glycerophospholipid metabolism. Functionally, catalyzes the NAD(P)H-dependent reduction of dihydroxyacetonephosphate (DHAP or glycerone phosphate) to glycerol 1-phosphate (G1P). The G1P thus generated is used as the glycerophosphate backbone of phospholipids in the cellular membranes of Archaea. This Haloarcula marismortui (strain ATCC 43049 / DSM 3752 / JCM 8966 / VKM B-1809) (Halobacterium marismortui) protein is Glycerol-1-phosphate dehydrogenase [NAD(P)+].